A 344-amino-acid polypeptide reads, in one-letter code: MLDKIKELTQTIEDFSIESKEQLEQFRLEYLSKKGKITSMFDGFDFKTVAPEIKKSMGQEMNKLKVLAQTKFEELQDKLNTGSNDNSVYQKIDTSLPVIPNELGGRHPINIVREQIYTVFERMGFNLSDGPEIEDDFHNFTALNFPENHPAREMQDTFFIERNPDIVLRTHTSSVQVRVMENQKPPIRTISPGRVYRNEAISARAHCMFHQIEGLYVDKNVSFADLKNTLYHFSKEMFGKDTQIRFRPSFFPFTEPSAEMDISCFICNGKGCNICKQSGWVEIGGAGMLDPNVLINAKIDPKVYSGFAFGMGIERITMLKYQIKDLRLFTENDVRFLRQFKHAE.

Position 255 (E255) interacts with Mg(2+).

This sequence belongs to the class-II aminoacyl-tRNA synthetase family. Phe-tRNA synthetase alpha subunit type 1 subfamily. As to quaternary structure, tetramer of two alpha and two beta subunits. It depends on Mg(2+) as a cofactor.

It localises to the cytoplasm. The enzyme catalyses tRNA(Phe) + L-phenylalanine + ATP = L-phenylalanyl-tRNA(Phe) + AMP + diphosphate + H(+). The protein is Phenylalanine--tRNA ligase alpha subunit of Cytophaga hutchinsonii (strain ATCC 33406 / DSM 1761 / CIP 103989 / NBRC 15051 / NCIMB 9469 / D465).